We begin with the raw amino-acid sequence, 476 residues long: Siroheme synthase 1 (476 aa).

A precorrin-2 dehydrogenase /sirohydrochlorin ferrochelatase region spans residues 1-203; that stretch reads MDYLPIFADL…GQTAEAQRQL (203 aa). Residues 22-23 and 43-44 contribute to the NAD(+) site; these read EV and QS. Serine 128 is modified (phosphoserine). Residues 219–476 are uroporphyrinogen-III C-methyltransferase; sequence GEIALVGAGP…VSRPAVVNLA (258 aa). Proline 228 is a binding site for S-adenosyl-L-methionine. Catalysis depends on aspartate 251, which acts as the Proton acceptor. Lysine 273 serves as the catalytic Proton donor. S-adenosyl-L-methionine is bound by residues 304-306, isoleucine 309, 334-335, methionine 386, and glycine 415; these read GGD and TA.

In the N-terminal section; belongs to the precorrin-2 dehydrogenase / sirohydrochlorin ferrochelatase family. It in the C-terminal section; belongs to the precorrin methyltransferase family.

The catalysed reaction is uroporphyrinogen III + 2 S-adenosyl-L-methionine = precorrin-2 + 2 S-adenosyl-L-homocysteine + H(+). The enzyme catalyses precorrin-2 + NAD(+) = sirohydrochlorin + NADH + 2 H(+). It carries out the reaction siroheme + 2 H(+) = sirohydrochlorin + Fe(2+). The protein operates within cofactor biosynthesis; adenosylcobalamin biosynthesis; precorrin-2 from uroporphyrinogen III: step 1/1. Its pathway is cofactor biosynthesis; adenosylcobalamin biosynthesis; sirohydrochlorin from precorrin-2: step 1/1. It functions in the pathway porphyrin-containing compound metabolism; siroheme biosynthesis; precorrin-2 from uroporphyrinogen III: step 1/1. It participates in porphyrin-containing compound metabolism; siroheme biosynthesis; siroheme from sirohydrochlorin: step 1/1. The protein operates within porphyrin-containing compound metabolism; siroheme biosynthesis; sirohydrochlorin from precorrin-2: step 1/1. Functionally, multifunctional enzyme that catalyzes the SAM-dependent methylations of uroporphyrinogen III at position C-2 and C-7 to form precorrin-2 via precorrin-1. Then it catalyzes the NAD-dependent ring dehydrogenation of precorrin-2 to yield sirohydrochlorin. Finally, it catalyzes the ferrochelation of sirohydrochlorin to yield siroheme. This is Siroheme synthase 1 from Serratia proteamaculans (strain 568).